Reading from the N-terminus, the 679-residue chain is ATP-dependent zinc metalloprotease FtsH (679 aa).

Residues 1–6 (MNRIFR) lie on the Cytoplasmic side of the membrane. Residues 7 to 27 (NTIFYLLIFLVIVGIVSVFNS) form a helical membrane-spanning segment. Residues 28 to 114 (DQTETENVSF…IEPADETSGW (87 aa)) are Extracellular-facing. A helical membrane pass occupies residues 115–135 (VQFFTGIIPFIIIFILFFFLL). The Cytoplasmic portion of the chain corresponds to 136–679 (SQAQGGGSRV…SFEDDTNKKE (544 aa)). 206-213 (GPPGTGKT) serves as a coordination point for ATP. His-428 contacts Zn(2+). Glu-429 is a catalytic residue. Zn(2+) is bound by residues His-432 and Asp-504. Basic and acidic residues-rich tracts occupy residues 621 to 642 (LEKEKASESDVKVNINSKKEET) and 658 to 679 (PIEKDPSVEDNRSFEDDTNKKE). Residues 621–679 (LEKEKASESDVKVNINSKKEETPQVEAEQPQEPNTDEPIEKDPSVEDNRSFEDDTNKKE) form a disordered region.

This sequence in the central section; belongs to the AAA ATPase family. The protein in the C-terminal section; belongs to the peptidase M41 family. In terms of assembly, homohexamer. Zn(2+) is required as a cofactor.

The protein resides in the cell membrane. Acts as a processive, ATP-dependent zinc metallopeptidase for both cytoplasmic and membrane proteins. Plays a role in the quality control of integral membrane proteins. The polypeptide is ATP-dependent zinc metalloprotease FtsH (Alkalihalophilus pseudofirmus (strain ATCC BAA-2126 / JCM 17055 / OF4) (Bacillus pseudofirmus)).